The primary structure comprises 339 residues: MTIAIRSVEKQFGRYPALNKVDLEIADGELLALLGPSGSGKTTLLRTIAGLEFPDAGQVLFDGQDVTYASAAARRVGFVFQQYALFKHMTVAKNIAFGLDVRKGKDKPSKAEIARRVEELLKLVELEGLGGRYPSQLSGGQRQRVALSRALAVQPSVLLLDEPFGALDATVRKSLRRELRRVHDATGVTTIFVTHDQEEALELADRVAILNNGRIEQIGTPDQVHDAPETAFVCGFVGEANRFDGQVSGGRFKAGALTVPASALKDGAATAYVRPHDFALDEAGFEVLIERAQVQGALTAVTALTSDGRRLEISASRADADRFTGAVKIVARKAHVYAA.

The ABC transporter domain maps to 3–237 (IAIRSVEKQF…PETAFVCGFV (235 aa)). Position 35-42 (35-42 (GPSGSGKT)) interacts with ATP.

It belongs to the ABC transporter superfamily. Sulfate/tungstate importer (TC 3.A.1.6) family. In terms of assembly, the complex is composed of two ATP-binding proteins (CysA), two transmembrane proteins (CysT and CysW) and a solute-binding protein (CysP).

Its subcellular location is the cell inner membrane. The enzyme catalyses sulfate(out) + ATP + H2O = sulfate(in) + ADP + phosphate + H(+). The catalysed reaction is thiosulfate(out) + ATP + H2O = thiosulfate(in) + ADP + phosphate + H(+). Part of the ABC transporter complex CysAWTP involved in sulfate/thiosulfate import. Responsible for energy coupling to the transport system. In Caulobacter vibrioides (strain ATCC 19089 / CIP 103742 / CB 15) (Caulobacter crescentus), this protein is Sulfate/thiosulfate import ATP-binding protein CysA.